The chain runs to 490 residues: UDP-glycosyltransferase 73C7 (490 aa).

Residues Ser291, 351 to 353, 368 to 376, and 390 to 393 contribute to the UDP-alpha-D-glucose site; these read APQ, HCGWNSTLE, and FAEQ.

This sequence belongs to the UDP-glycosyltransferase family.

This Arabidopsis thaliana (Mouse-ear cress) protein is UDP-glycosyltransferase 73C7 (UGT73C7).